A 198-amino-acid polypeptide reads, in one-letter code: Imidazole glycerol phosphate synthase subunit HisH (198 aa).

The 194-residue stretch at 1–194 folds into the Glutamine amidotransferase type-1 domain; sequence MIAIIDYGLG…LKGGFQDDQT (194 aa). The Nucleophile role is filled by Cys77. Catalysis depends on residues His169 and Glu171.

As to quaternary structure, heterodimer of HisH and HisF.

It localises to the cytoplasm. The catalysed reaction is 5-[(5-phospho-1-deoxy-D-ribulos-1-ylimino)methylamino]-1-(5-phospho-beta-D-ribosyl)imidazole-4-carboxamide + L-glutamine = D-erythro-1-(imidazol-4-yl)glycerol 3-phosphate + 5-amino-1-(5-phospho-beta-D-ribosyl)imidazole-4-carboxamide + L-glutamate + H(+). It carries out the reaction L-glutamine + H2O = L-glutamate + NH4(+). The protein operates within amino-acid biosynthesis; L-histidine biosynthesis; L-histidine from 5-phospho-alpha-D-ribose 1-diphosphate: step 5/9. Functionally, IGPS catalyzes the conversion of PRFAR and glutamine to IGP, AICAR and glutamate. The HisH subunit catalyzes the hydrolysis of glutamine to glutamate and ammonia as part of the synthesis of IGP and AICAR. The resulting ammonia molecule is channeled to the active site of HisF. This Staphylococcus saprophyticus subsp. saprophyticus (strain ATCC 15305 / DSM 20229 / NCIMB 8711 / NCTC 7292 / S-41) protein is Imidazole glycerol phosphate synthase subunit HisH.